A 455-amino-acid polypeptide reads, in one-letter code: Ribulose bisphosphate carboxylase large chain (455 aa).

Residue Lys5 is modified to N6,N6,N6-trimethyllysine. Substrate is bound by residues Asn114 and Thr164. Residue Lys166 is the Proton acceptor of the active site. Lys168 contacts substrate. Positions 192, 194, and 195 each coordinate Mg(2+). An N6-carboxylysine modification is found at Lys192. The Proton acceptor role is filled by His285. The substrate site is built by Arg286, His318, and Ser370.

Belongs to the RuBisCO large chain family. Type I subfamily. As to quaternary structure, heterohexadecamer of 8 large chains and 8 small chains; disulfide-linked. The disulfide link is formed within the large subunit homodimers. Mg(2+) is required as a cofactor. The disulfide bond which can form in the large chain dimeric partners within the hexadecamer appears to be associated with oxidative stress and protein turnover.

It is found in the plastid. Its subcellular location is the chloroplast. It catalyses the reaction 2 (2R)-3-phosphoglycerate + 2 H(+) = D-ribulose 1,5-bisphosphate + CO2 + H2O. The catalysed reaction is D-ribulose 1,5-bisphosphate + O2 = 2-phosphoglycolate + (2R)-3-phosphoglycerate + 2 H(+). Functionally, ruBisCO catalyzes two reactions: the carboxylation of D-ribulose 1,5-bisphosphate, the primary event in carbon dioxide fixation, as well as the oxidative fragmentation of the pentose substrate in the photorespiration process. Both reactions occur simultaneously and in competition at the same active site. The sequence is that of Ribulose bisphosphate carboxylase large chain from Senna didymobotrya (Popcorn cassia).